Here is a 756-residue protein sequence, read N- to C-terminus: Serine/threonine-protein kinase tousled-like 1-B (756 aa).

Low complexity-rich tracts occupy residues 1–12 and 23–34; these read MSVQSNSNSSGS and STGSPTPGSVSP. 2 disordered regions span residues 1 to 56 and 69 to 185; these read MSVQ…LDPR and VSGN…QNSS. Residues 45 to 56 are compositionally biased toward basic and acidic residues; the sequence is EGMDELHSLDPR. Positions 72–85 are enriched in gly residues; it reads NTGGSTGSASGGPK. Over residues 93–103 the composition is skewed to low complexity; the sequence is SSHSFGSLGSS. The segment covering 104–120 has biased composition (basic and acidic residues); that stretch reads SDKESETPEKKHFESSR. Positions 243-268 form a coiled coil; that stretch reads DLRRQIDEQQKLLERFKERLNKCTTM. The segment at 339-375 is disordered; it reads KLLAKRKPSSTPSSQSPTPNESKQRKTKAVNGADNDP. Low complexity predominate over residues 347–357; sequence SSTPSSQSPTP. The stretch at 397–435 forms a coiled coil; the sequence is FKLRLGHLKKEEAEIQAELERLERVRNLHIRELKRINNE. The 279-residue stretch at 450 to 728 folds into the Protein kinase domain; that stretch reads YLLLHLLGRG…VHQLGSDSYL (279 aa). Residues 456–464 and K479 each bind ATP; that span reads LGRGGFSEV. D580 acts as the Proton acceptor in catalysis. Residues 734–756 form a disordered region; that stretch reads RSNSSGNLQATPASPAPSGIISY. The span at 735–745 shows a compositional bias: polar residues; sequence SNSSGNLQATP.

The protein belongs to the protein kinase superfamily. Ser/Thr protein kinase family. The cofactor is Mg(2+).

It is found in the nucleus. The enzyme catalyses L-seryl-[protein] + ATP = O-phospho-L-seryl-[protein] + ADP + H(+). The catalysed reaction is L-threonyl-[protein] + ATP = O-phospho-L-threonyl-[protein] + ADP + H(+). This Danio rerio (Zebrafish) protein is Serine/threonine-protein kinase tousled-like 1-B (tlk1b).